The chain runs to 829 residues: 1,4-alpha-glucan branching enzyme GlgB (829 aa).

The Nucleophile role is filled by D405. E458 serves as the catalytic Proton donor. Positions 758–829 are disordered; sequence ASKATKVSTK…TTAKKTKDNA (72 aa). Low complexity-rich tracts occupy residues 778-789 and 810-820; these read VKAATKSSVTKV and VTKTAKASAKT.

The protein belongs to the glycosyl hydrolase 13 family. GlgB subfamily. In terms of assembly, monomer.

The enzyme catalyses Transfers a segment of a (1-&gt;4)-alpha-D-glucan chain to a primary hydroxy group in a similar glucan chain.. It participates in glycan biosynthesis; glycogen biosynthesis. Its function is as follows. Catalyzes the formation of the alpha-1,6-glucosidic linkages in glycogen by scission of a 1,4-alpha-linked oligosaccharide from growing alpha-1,4-glucan chains and the subsequent attachment of the oligosaccharide to the alpha-1,6 position. This chain is 1,4-alpha-glucan branching enzyme GlgB, found in Actinobacillus succinogenes (strain ATCC 55618 / DSM 22257 / CCUG 43843 / 130Z).